We begin with the raw amino-acid sequence, 533 residues long: CWF19-like protein 1 homolog (533 aa).

Residues 290-314 form a disordered region; sequence EMGGAEDGAGNGRKRHNDGGNDGPR.

The protein belongs to the CWF19 family.

This chain is CWF19-like protein 1 homolog, found in Caenorhabditis elegans.